The sequence spans 255 residues: 4-diphosphocytidyl-2-C-methyl-D-erythritol kinase (255 aa).

The active site involves lysine 9. 95 to 105 (PSQAGLGGGSS) contacts ATP. Aspartate 137 is an active-site residue.

Belongs to the GHMP kinase family. IspE subfamily.

It catalyses the reaction 4-CDP-2-C-methyl-D-erythritol + ATP = 4-CDP-2-C-methyl-D-erythritol 2-phosphate + ADP + H(+). It participates in isoprenoid biosynthesis; isopentenyl diphosphate biosynthesis via DXP pathway; isopentenyl diphosphate from 1-deoxy-D-xylulose 5-phosphate: step 3/6. Its function is as follows. Catalyzes the phosphorylation of the position 2 hydroxy group of 4-diphosphocytidyl-2C-methyl-D-erythritol. The polypeptide is 4-diphosphocytidyl-2-C-methyl-D-erythritol kinase (Sulfurovum sp. (strain NBC37-1)).